We begin with the raw amino-acid sequence, 555 residues long: uncharacterized protein (555 aa).

Residues 1–83 (MSNEDETTRL…GRRKLLCLYG (83 aa)) lie on the Extracellular side of the membrane. The helical transmembrane segment at 84–104 (LVMIICIAESISMTATIPLVM) threads the bilayer. Topologically, residues 105 to 125 (DKVAEGISDENGHYDSVAVQT) are cytoplasmic. Residues 126–146 (IVSSISSSTMMIAGAISIFMA) form a helical membrane-spanning segment. Topologically, residues 147–188 (GKWGELSDRIGRVRVFKYMSGIRVIGLLTHVFTLSSKMKYHK) are extracellular. The chain crosses the membrane as a helical span at residues 189–209 (WAIVLTACIVPSFGGLFALVA). At 210–229 (NGNSYVSDIVKTEHRMVTIG) the chain is on the cytoplasmic side. The chain crosses the membrane as a helical span at residues 230 to 250 (IMMSCIYATMGVGPMFGSFLV). At 251–257 (KWTHGNG) the chain is on the extracellular side. Residues 258-278 (FIPIYTSIAFVILALIICETI) form a helical membrane-spanning segment. Residues 279 to 356 (MVEPRHETQM…LVPRHTVILL (78 aa)) lie on the Cytoplasmic side of the membrane. The tract at residues 289–311 (AHSQSTYTKRREKLRSQSGSDDA) is disordered. A helical transmembrane segment spans residues 357–377 (IVLDILFVCGTTSCMPALILF). At 378–386 (STYEYKWHA) the chain is on the extracellular side. A helical membrane pass occupies residues 387–407 (VELGYFISILGIGRGVVLLVV). At 408-428 (SPTLLYTLKRIYQHLNHSIDK) the chain is on the cytoplasmic side. Residues 429–449 (IDIFCIQFSMIVITLSLFVMI) traverse the membrane as a helical segment. At 450–459 (RFGEKTPTSM) the chain is on the extracellular side. A helical transmembrane segment spans residues 460-480 (IIFALLQALSAFCSPTLQSGI). Over 481-491 (IKYTSKKHTGE) the chain is Cytoplasmic. Residues 492 to 512 (MFGAMALVRSCVMLVIPPILL) form a helical membrane-spanning segment. Topologically, residues 513 to 523 (KLYGSTVSVNP) are extracellular. A helical membrane pass occupies residues 524-544 (SLFMYIPFSTSIVAILLTFFL). The Cytoplasmic portion of the chain corresponds to 545-555 (RIYKNPPLDGP).

It is found in the membrane. This is an uncharacterized protein from Saccharomyces cerevisiae (strain ATCC 204508 / S288c) (Baker's yeast).